Consider the following 131-residue polypeptide: Fumarate reductase subunit C (131 aa).

The next 3 helical transmembrane spans lie at 30 to 50 (EGTA…LFAL), 63 to 83 (FLQN…ALLH), and 109 to 129 (IIKS…FVAL).

This sequence belongs to the FrdC family. Part of an enzyme complex containing four subunits: a flavoprotein (FrdA), an iron-sulfur protein (FrdB), and two hydrophobic anchor proteins (FrdC and FrdD).

Its subcellular location is the cell inner membrane. Functionally, two distinct, membrane-bound, FAD-containing enzymes are responsible for the catalysis of fumarate and succinate interconversion; fumarate reductase is used in anaerobic growth, and succinate dehydrogenase is used in aerobic growth. Anchors the catalytic components of the fumarate reductase complex to the cell inner membrane, binds quinones. The sequence is that of Fumarate reductase subunit C from Shigella dysenteriae serotype 1 (strain Sd197).